The chain runs to 157 residues: Probable intracellular pathogenesis-related protein T1 (157 aa).

Residues Asn-79 and Asn-117 are each glycosylated (N-linked (GlcNAc...) asparagine).

It belongs to the BetVI family.

The polypeptide is Probable intracellular pathogenesis-related protein T1 (PCKR3) (Catharanthus roseus (Madagascar periwinkle)).